Here is a 471-residue protein sequence, read N- to C-terminus: MSENIGKIVQVIGAVVDVSFPNGKLPPILTALEIHNPNSIDAPKLICEVAQHLGDDIVRTIAMDATEGLKRGMDVLDTGHPIMAPVGKASLGRIMNVVGQPIDGLGVIDTKTYLPIHRKPPSFLDQNTSVEPLETGIKVIDLLVPFPKGGKMGLFGGAGVGKTVILMEMINNIARQHGGISVFAGVGERTREGNDLYHEMKEAGVLEKAILVYGQMNEPPGARSRVALTALTCAEYFRDEEHQDVLLFIDNIFRFIQAGSEVSALLGRMPSAVGYQPTLGTDLGSLEERITSTHNGSITSVQAVYVPADDLTDPAPATTFSHLDGTLVLSRQIAELGIYPAVDPLDSTSRILEPNFVGEEHYTVARGVQKILQKYKELQDIIAILGMDELSDEDKLVVSRARRIQRFLSQPFHVAETFTGTAGEYVKLEDTIKGFKGILAGEYDHLSESDFYMVGNIDSAVAKYEKRKESK.

156–163 (GGAGVGKT) contributes to the ATP binding site.

This sequence belongs to the ATPase alpha/beta chains family. In terms of assembly, F-type ATPases have 2 components, CF(1) - the catalytic core - and CF(0) - the membrane proton channel. CF(1) has five subunits: alpha(3), beta(3), gamma(1), delta(1), epsilon(1). CF(0) has three main subunits: a(1), b(2) and c(9-12). The alpha and beta chains form an alternating ring which encloses part of the gamma chain. CF(1) is attached to CF(0) by a central stalk formed by the gamma and epsilon chains, while a peripheral stalk is formed by the delta and b chains.

The protein resides in the cell membrane. It carries out the reaction ATP + H2O + 4 H(+)(in) = ADP + phosphate + 5 H(+)(out). Functionally, produces ATP from ADP in the presence of a proton gradient across the membrane. The catalytic sites are hosted primarily by the beta subunits. The chain is ATP synthase subunit beta from Lawsonia intracellularis (strain PHE/MN1-00).